Reading from the N-terminus, the 237-residue chain is uncharacterized protein (237 aa).

This is an uncharacterized protein from Dictyostelium discoideum (Social amoeba).